The primary structure comprises 178 residues: Crossover junction endodeoxyribonuclease RuvC (178 aa).

Catalysis depends on residues Asp-7, Glu-68, and Asp-141. Positions 7, 68, and 141 each coordinate Mg(2+).

The protein belongs to the RuvC family. As to quaternary structure, homodimer which binds Holliday junction (HJ) DNA. The HJ becomes 2-fold symmetrical on binding to RuvC with unstacked arms; it has a different conformation from HJ DNA in complex with RuvA. In the full resolvosome a probable DNA-RuvA(4)-RuvB(12)-RuvC(2) complex forms which resolves the HJ. Mg(2+) is required as a cofactor.

Its subcellular location is the cytoplasm. The enzyme catalyses Endonucleolytic cleavage at a junction such as a reciprocal single-stranded crossover between two homologous DNA duplexes (Holliday junction).. Its function is as follows. The RuvA-RuvB-RuvC complex processes Holliday junction (HJ) DNA during genetic recombination and DNA repair. Endonuclease that resolves HJ intermediates. Cleaves cruciform DNA by making single-stranded nicks across the HJ at symmetrical positions within the homologous arms, yielding a 5'-phosphate and a 3'-hydroxyl group; requires a central core of homology in the junction. The consensus cleavage sequence is 5'-(A/T)TT(C/G)-3'. Cleavage occurs on the 3'-side of the TT dinucleotide at the point of strand exchange. HJ branch migration catalyzed by RuvA-RuvB allows RuvC to scan DNA until it finds its consensus sequence, where it cleaves and resolves the cruciform DNA. This is Crossover junction endodeoxyribonuclease RuvC from Parafrankia sp. (strain EAN1pec).